We begin with the raw amino-acid sequence, 259 residues long: 3-hydroxypropionyl-coenzyme A dehydratase (259 aa).

The active-site Nucleophile is the E113. E133 (proton acceptor) is an active-site residue.

Belongs to the enoyl-CoA hydratase/isomerase family. In terms of assembly, monomer.

The catalysed reaction is 3-hydroxypropanoyl-CoA = acryloyl-CoA + H2O. In terms of biological role, plays a role in autotrophic carbon fixation via the 3-hydroxypropionate/4-hydroxybutyrate cycle. Catalyzes the reversible dehydration of 3-hydroxypropionyl-CoA to form acryloyl-CoA, and the reversible dehydration of (S)-3-hydroxybutyryl-CoA to form crotonyl-CoA. Inactive towards (R)-3-hydroxybutyryl-CoA. The sequence is that of 3-hydroxypropionyl-coenzyme A dehydratase from Metallosphaera sedula (strain ATCC 51363 / DSM 5348 / JCM 9185 / NBRC 15509 / TH2).